Reading from the N-terminus, the 355-residue chain is UDP-N-acetylglucosamine--N-acetylmuramyl-(pentapeptide) pyrophosphoryl-undecaprenol N-acetylglucosamine transferase (355 aa).

UDP-N-acetyl-alpha-D-glucosamine-binding positions include 7–9, Asn-119, Arg-159, Ser-187, Ile-241, and Gln-286; that span reads TGG.

This sequence belongs to the glycosyltransferase 28 family. MurG subfamily.

Its subcellular location is the cell inner membrane. The catalysed reaction is di-trans,octa-cis-undecaprenyl diphospho-N-acetyl-alpha-D-muramoyl-L-alanyl-D-glutamyl-meso-2,6-diaminopimeloyl-D-alanyl-D-alanine + UDP-N-acetyl-alpha-D-glucosamine = di-trans,octa-cis-undecaprenyl diphospho-[N-acetyl-alpha-D-glucosaminyl-(1-&gt;4)]-N-acetyl-alpha-D-muramoyl-L-alanyl-D-glutamyl-meso-2,6-diaminopimeloyl-D-alanyl-D-alanine + UDP + H(+). The protein operates within cell wall biogenesis; peptidoglycan biosynthesis. Cell wall formation. Catalyzes the transfer of a GlcNAc subunit on undecaprenyl-pyrophosphoryl-MurNAc-pentapeptide (lipid intermediate I) to form undecaprenyl-pyrophosphoryl-MurNAc-(pentapeptide)GlcNAc (lipid intermediate II). The protein is UDP-N-acetylglucosamine--N-acetylmuramyl-(pentapeptide) pyrophosphoryl-undecaprenol N-acetylglucosamine transferase of Nitrosomonas eutropha (strain DSM 101675 / C91 / Nm57).